The following is an 848-amino-acid chain: Translation initiation factor IF-2 (848 aa).

A disordered region spans residues 106–150 (TEQQTEAENSTNINLSEQTIKNNSHQSSSNTIETTQEKKQNDDLS). Over residues 112–139 (AENSTNINLSEQTIKNNSHQSSSNTIET) the composition is skewed to polar residues. Residues 347 to 517 (PRAPIITVMG…LLLADMLELK (171 aa)) form the tr-type G domain. The G1 stretch occupies residues 356–363 (GHVDHGKT). 356–363 (GHVDHGKT) contributes to the GTP binding site. The G2 stretch occupies residues 381 to 385 (GITQH). Positions 403-406 (DTPG) are G3. GTP is bound by residues 403–407 (DTPGH) and 457–460 (NKID). Residues 457–460 (NKID) are G4. The segment at 493 to 495 (SAL) is G5.

This sequence belongs to the TRAFAC class translation factor GTPase superfamily. Classic translation factor GTPase family. IF-2 subfamily.

Its subcellular location is the cytoplasm. One of the essential components for the initiation of protein synthesis. Protects formylmethionyl-tRNA from spontaneous hydrolysis and promotes its binding to the 30S ribosomal subunits. Also involved in the hydrolysis of GTP during the formation of the 70S ribosomal complex. This chain is Translation initiation factor IF-2, found in Orientia tsutsugamushi (strain Boryong) (Rickettsia tsutsugamushi).